The sequence spans 217 residues: Adenylate kinase (217 aa).

10–15 (GAGKGT) is a binding site for ATP. The tract at residues 30 to 59 (STGDMLREAVAKGTELGKKAKEYMDKGELV) is NMP. AMP-binding positions include T31, R36, 57–59 (ELV), 85–88 (GFPR), and Q92. Positions 126 to 163 (YRRTCRNCGAVYHLIYAPPKEDNKCDKCGGELYQRDDD) are LID. Position 127 (R127) interacts with ATP. The Zn(2+) site is built by C130 and C133. ATP is bound at residue 136-137 (VY). The Zn(2+) site is built by C150 and C153. AMP is bound by residues R160 and R171. Position 199 (K199) interacts with ATP.

The protein belongs to the adenylate kinase family. As to quaternary structure, monomer.

It localises to the cytoplasm. It catalyses the reaction AMP + ATP = 2 ADP. Its pathway is purine metabolism; AMP biosynthesis via salvage pathway; AMP from ADP: step 1/1. Its function is as follows. Catalyzes the reversible transfer of the terminal phosphate group between ATP and AMP. Plays an important role in cellular energy homeostasis and in adenine nucleotide metabolism. This chain is Adenylate kinase, found in Archaeoglobus fulgidus (strain ATCC 49558 / DSM 4304 / JCM 9628 / NBRC 100126 / VC-16).